A 196-amino-acid polypeptide reads, in one-letter code: tRNA(Phe) 7-((3-amino-3-carboxypropyl)-4-demethylwyosine(37)-N(4))-methyltransferase (196 aa).

The protein belongs to the TYW3 family.

It catalyses the reaction 4-demethyl-7-[(3S)-3-amino-3-carboxypropyl]wyosine(37) in tRNA(Phe) + S-adenosyl-L-methionine = 7-[(3S)-3-amino-3-carboxypropyl]wyosine(37) in tRNA(Phe) + S-adenosyl-L-homocysteine + H(+). S-adenosyl-L-methionine-dependent methyltransferase that acts as a component of the wyosine derivatives biosynthesis pathway. Probably methylates N-4 position of wybutosine-86 to produce wybutosine-72. This is tRNA(Phe) 7-((3-amino-3-carboxypropyl)-4-demethylwyosine(37)-N(4))-methyltransferase from Archaeoglobus fulgidus (strain ATCC 49558 / DSM 4304 / JCM 9628 / NBRC 100126 / VC-16).